The primary structure comprises 400 residues: Elongation factor Tu (400 aa).

A tr-type G domain is found at 10 to 210; it reads KPHINVGTIG…ALDEYIPEPK (201 aa). Positions 19-26 are G1; the sequence is GHVDHGKT. 19 to 26 is a GTP binding site; it reads GHVDHGKT. Residue Thr-26 coordinates Mg(2+). A G2 region spans residues 64-68; the sequence is GITIA. Residues 85-88 form a G3 region; sequence DCPG. GTP is bound by residues 85 to 89 and 140 to 143; these read DCPGH and NKAD. The G4 stretch occupies residues 140–143; it reads NKAD. The segment at 178-180 is G5; it reads SAL.

It belongs to the TRAFAC class translation factor GTPase superfamily. Classic translation factor GTPase family. EF-Tu/EF-1A subfamily. In terms of assembly, monomer.

It is found in the cytoplasm. It catalyses the reaction GTP + H2O = GDP + phosphate + H(+). In terms of biological role, GTP hydrolase that promotes the GTP-dependent binding of aminoacyl-tRNA to the A-site of ribosomes during protein biosynthesis. This Rubrobacter xylanophilus (strain DSM 9941 / JCM 11954 / NBRC 16129 / PRD-1) protein is Elongation factor Tu.